A 345-amino-acid polypeptide reads, in one-letter code: Phosphoribosylformylglycinamidine cyclo-ligase (345 aa).

This sequence belongs to the AIR synthase family.

It localises to the cytoplasm. It catalyses the reaction 2-formamido-N(1)-(5-O-phospho-beta-D-ribosyl)acetamidine + ATP = 5-amino-1-(5-phospho-beta-D-ribosyl)imidazole + ADP + phosphate + H(+). The protein operates within purine metabolism; IMP biosynthesis via de novo pathway; 5-amino-1-(5-phospho-D-ribosyl)imidazole from N(2)-formyl-N(1)-(5-phospho-D-ribosyl)glycinamide: step 2/2. This chain is Phosphoribosylformylglycinamidine cyclo-ligase, found in Actinobacillus pleuropneumoniae serotype 5b (strain L20).